We begin with the raw amino-acid sequence, 32 residues long: Photosystem II reaction center protein T (32 aa).

Residues 3–23 (SIAYVLIFACLIGLFFFAIFF) traverse the membrane as a helical segment.

It belongs to the PsbT family. As to quaternary structure, PSII is composed of 1 copy each of membrane proteins PsbA, PsbB, PsbC, PsbD, PsbE, PsbF, PsbH, PsbI, PsbJ, PsbK, PsbL, PsbM, PsbT, PsbX, PsbY, PsbZ, Psb30/Ycf12, peripheral proteins PsbO, CyanoQ (PsbQ), PsbU, PsbV and a large number of cofactors. It forms dimeric complexes.

The protein localises to the cellular thylakoid membrane. In terms of biological role, found at the monomer-monomer interface of the photosystem II (PS II) dimer, plays a role in assembly and dimerization of PSII. PSII is a light-driven water plastoquinone oxidoreductase, using light energy to abstract electrons from H(2)O, generating a proton gradient subsequently used for ATP formation. The polypeptide is Photosystem II reaction center protein T (Cyanothece sp. (strain PCC 7425 / ATCC 29141)).